Consider the following 282-residue polypeptide: Polyamine aminopropyltransferase (282 aa).

The PABS domain occupies 11–239; that stretch reads IEWYPRGYGV…SPWSFLVGVK (229 aa). Gln-36 is an S-methyl-5'-thioadenosine binding site. The spermidine site is built by His-67 and Asp-91. Residues Glu-111 and 142-143 contribute to the S-methyl-5'-thioadenosine site; that span reads DG. Catalysis depends on Asp-160, which acts as the Proton acceptor. 160 to 163 provides a ligand contact to spermidine; the sequence is DSTD. Pro-167 contacts S-methyl-5'-thioadenosine.

This sequence belongs to the spermidine/spermine synthase family. As to quaternary structure, homodimer or homotetramer.

It is found in the cytoplasm. It carries out the reaction S-adenosyl 3-(methylsulfanyl)propylamine + putrescine = S-methyl-5'-thioadenosine + spermidine + H(+). It functions in the pathway amine and polyamine biosynthesis; spermidine biosynthesis; spermidine from putrescine: step 1/1. Catalyzes the irreversible transfer of a propylamine group from the amino donor S-adenosylmethioninamine (decarboxy-AdoMet) to putrescine (1,4-diaminobutane) to yield spermidine. This chain is Polyamine aminopropyltransferase, found in Thermococcus onnurineus (strain NA1).